The following is a 3658-amino-acid chain: Serine/threonine-protein kinase SMG1 (3658 aa).

Disordered regions lie at residues 1 to 99 (MSRR…TYGR) and 116 to 142 (FTSV…MSYS). Positions 24-33 (NDWQPRTDSA) are enriched in polar residues. Composition is skewed to basic and acidic residues over residues 67–84 (QRHD…DEKG) and 127–136 (ATKDMRKSQE). At lysine 171 the chain carries N6-acetyllysine. Positions 1281 to 1864 (RELQKSIEVQ…LYPAIVGTIS (584 aa)) constitute an FAT domain. An HEAT repeat occupies 1815-1850 (APWRGIIPQLFSRLNHPEVYVRQSICNLLCRVAQDS). The interval 1896-1917 (ECEGGSPPASQDSNKDEPKSGL) is disordered. The PI3K/PI4K catalytic domain occupies 2122-2461 (VGGTITILPT…MEREITRSLF (340 aa)). The G-loop stretch occupies residues 2128–2134 (ILPTKTK). The tract at residues 2330–2338 (GLGDRHLDN) is catalytic loop. An activation loop region spans residues 2350-2374 (HIDYNVCFEKGKSLRVPEKVPFRMT). Threonine 3547 carries the post-translational modification Phosphothreonine. A phosphoserine mark is found at serine 3553 and serine 3567. The segment covering 3565-3576 (ATSADTPPSTIP) has biased composition (polar residues). The disordered stretch occupies residues 3565-3588 (ATSADTPPSTIPGTGKSIACSPKK). Residues threonine 3570 and threonine 3574 each carry the phosphothreonine modification. The 33-residue stretch at 3626–3658 (RRMSVAEQVDYVIKEATNLDNLAQLYEGWTAWV) folds into the FATC domain.

Belongs to the PI3/PI4-kinase family. As to quaternary structure, component of the SMG1C complex composed of SMG1, SMG8 and SMG9; the recruitment of SMG8 to SMG1 N-terminus induces a large conformational change in the SMG1 C-terminal head domain containing the catalytic domain. Component of the transient SURF (SMG1-UPF1-eRF1-eRF3) complex. Part of a complex composed of SMG1, DHX34 and UPF1; within the complex DHX34 acts as a scaffolding protein to facilitate SMG1 phosphorylation of UPF1. Interacts with PRKCI. Interacts with TELO2 and TTI1. Interacts with RUVBL1 and RUVBL2. Interacts with DHX34 (via C-terminus); the interaction is RNA-independent. Mn(2+) serves as cofactor. Post-translationally, autophosphorylated.

The protein resides in the nucleus. It is found in the cytoplasm. It catalyses the reaction L-seryl-[protein] + ATP = O-phospho-L-seryl-[protein] + ADP + H(+). The enzyme catalyses L-threonyl-[protein] + ATP = O-phospho-L-threonyl-[protein] + ADP + H(+). Its activity is regulated as follows. Inhibited by caffeine, LY294002 and wortmannin. In terms of biological role, serine/threonine protein kinase involved in both mRNA surveillance and genotoxic stress response pathways. Recognizes the substrate consensus sequence [ST]-Q. Plays a central role in nonsense-mediated decay (NMD) of mRNAs containing premature stop codons by phosphorylating UPF1/RENT1. Recruited by release factors to stalled ribosomes together with SMG8 and SMG9 (forming the SMG1C protein kinase complex), and UPF1 to form the transient SURF (SMG1-UPF1-eRF1-eRF3) complex. In EJC-dependent NMD, the SURF complex associates with the exon junction complex (EJC) through UPF2 and allows the formation of an UPF1-UPF2-UPF3 surveillance complex which is believed to activate NMD. Also acts as a genotoxic stress-activated protein kinase that displays some functional overlap with ATM. Can phosphorylate p53/TP53 and is required for optimal p53/TP53 activation after cellular exposure to genotoxic stress. Its depletion leads to spontaneous DNA damage and increased sensitivity to ionizing radiation (IR). May activate PRKCI but not PRKCZ. This chain is Serine/threonine-protein kinase SMG1, found in Mus musculus (Mouse).